The chain runs to 212 residues: NADH-quinone oxidoreductase subunit I (212 aa).

4Fe-4S ferredoxin-type domains are found at residues 76-105 (RLLESENERCIGCGLCEKICTSNCIRIITD) and 115-144 (LNYSINFGRCIYCGLCAEVCPELAIVHGDL). [4Fe-4S] cluster is bound by residues C85, C88, C91, C95, C124, C127, C130, and C134.

This sequence belongs to the complex I 23 kDa subunit family. In terms of assembly, NDH-1 is composed of 14 different subunits. Subunits NuoA, H, J, K, L, M, N constitute the membrane sector of the complex. It depends on [4Fe-4S] cluster as a cofactor.

It is found in the cell inner membrane. The catalysed reaction is a quinone + NADH + 5 H(+)(in) = a quinol + NAD(+) + 4 H(+)(out). NDH-1 shuttles electrons from NADH, via FMN and iron-sulfur (Fe-S) centers, to quinones in the respiratory chain. The immediate electron acceptor for the enzyme in this species is believed to be ubiquinone. Couples the redox reaction to proton translocation (for every two electrons transferred, four hydrogen ions are translocated across the cytoplasmic membrane), and thus conserves the redox energy in a proton gradient. This Helicobacter hepaticus (strain ATCC 51449 / 3B1) protein is NADH-quinone oxidoreductase subunit I.